We begin with the raw amino-acid sequence, 444 residues long: Pineal opsin (444 aa).

The disordered stretch occupies residues 1–20 (MDALQESPPSHHSLPSALPS). Residues 1–46 (MDALQESPPSHHSLPSALPSATGGNGTVATMHNPFERPLEGIAPWN) are Extracellular-facing. Residues 7–20 (SPPSHHSLPSALPS) are compositionally biased toward low complexity. Asn-25 carries N-linked (GlcNAc...) asparagine glycosylation. Residues 47 to 71 (FTMLAALMGTITALSLGENFAVIVV) form a helical membrane-spanning segment. The Cytoplasmic portion of the chain corresponds to 72-83 (TARFRQLRQPLN). Residues 84 to 108 (YVLVNLAAADLLVSAIGGSVSFFTN) traverse the membrane as a helical segment. The Extracellular segment spans residues 109-123 (IKGYFFLGVHACVLE). A disulfide bridge links Cys-120 with Cys-197. Residues 124-143 (GFAVTYFGVVALWSLALLAF) form a helical membrane-spanning segment. Over 144–162 (ERYFVICRPLGNFRLQSKH) the chain is Cytoplasmic. Residues 163–186 (AVLGLAVVWVFSLACTLPPVLGWS) form a helical membrane-spanning segment. Residues 187 to 210 (SYRPSMIGTTCEPNWYSGELHDHT) are Extracellular-facing. The chain crosses the membrane as a helical span at residues 211 to 238 (FILMFFSTCFIFPLAVIFFSYGKLIQKL). Over 239-260 (KKASETQRGLESTRRAEQQVTR) the chain is Cytoplasmic. A helical transmembrane segment spans residues 261-284 (MVVVMILAFLVCWMPYATFSIVVT). The Extracellular segment spans residues 285 to 292 (ACPTIHLD). The chain crosses the membrane as a helical span at residues 293 to 317 (PLLAAVPAFFSKTATVYNPVIYIFM). Lys-304 bears the N6-(retinylidene)lysine mark. The Cytoplasmic segment spans residues 318–444 (NKQFRDCFVQ…SESVSKICPV (127 aa)). Cys-331 is lipidated: S-palmitoyl cysteine. Disordered stretches follow at residues 341 to 360 (QTAG…QSPG) and 388 to 420 (EPTM…QQGT). The span at 409 to 419 (QQQGQQQQQQG) shows a compositional bias: low complexity.

The protein belongs to the G-protein coupled receptor 1 family. Opsin subfamily. In terms of processing, phosphorylated on some or all of the serine and threonine residues present in the C-terminal region. Pineal gland.

It is found in the membrane. This Petromyzon marinus (Sea lamprey) protein is Pineal opsin.